The primary structure comprises 867 residues: 2-methylcitrate dehydratase (2-methyl-trans-aconitate forming) (867 aa).

Residues cysteine 410, cysteine 476, and cysteine 479 each coordinate [4Fe-4S] cluster.

It belongs to the aconitase/IPM isomerase family. It depends on [4Fe-4S] cluster as a cofactor.

The catalysed reaction is (2S,3S)-2-methylcitrate = 2-methyl-trans-aconitate + H2O. The enzyme catalyses citrate = D-threo-isocitrate. It participates in organic acid metabolism; propanoate degradation. Inhibited by ferricyanide and EDTA. Its function is as follows. Involved in the catabolism of short chain fatty acids (SCFA) via the 2-methylcitrate cycle II (propionate degradation route). In vivo under anaerobic conditions, AcnD catalyzes the stereospecific dehydration of (2S,3S)-methylcitrate (2-MC) to yield the trans isomer of 2-methyl-aconitate (2-MCA). AcnD can also accept citrate and cis-aconitate, but with a lower efficiency. 2-methylisocitrate and isocitrate are not substrates. The protein is 2-methylcitrate dehydratase (2-methyl-trans-aconitate forming) (acnD) of Shewanella oneidensis (strain ATCC 700550 / JCM 31522 / CIP 106686 / LMG 19005 / NCIMB 14063 / MR-1).